A 198-amino-acid chain; its full sequence is Pyridoxal 5'-phosphate synthase subunit PdxT (198 aa).

49 to 51 contacts L-glutamine; sequence GES. Residue Cys81 is the Nucleophile of the active site. L-glutamine contacts are provided by residues Arg113 and 141 to 142; that span reads IR. Residues His177 and Glu179 each act as charge relay system in the active site.

Belongs to the glutaminase PdxT/SNO family. In terms of assembly, in the presence of PdxS, forms a dodecamer of heterodimers. Only shows activity in the heterodimer.

The enzyme catalyses aldehydo-D-ribose 5-phosphate + D-glyceraldehyde 3-phosphate + L-glutamine = pyridoxal 5'-phosphate + L-glutamate + phosphate + 3 H2O + H(+). The catalysed reaction is L-glutamine + H2O = L-glutamate + NH4(+). It participates in cofactor biosynthesis; pyridoxal 5'-phosphate biosynthesis. In terms of biological role, catalyzes the hydrolysis of glutamine to glutamate and ammonia as part of the biosynthesis of pyridoxal 5'-phosphate. The resulting ammonia molecule is channeled to the active site of PdxS. This Mycobacterium leprae (strain TN) protein is Pyridoxal 5'-phosphate synthase subunit PdxT.